The sequence spans 166 residues: Regulator of ribonuclease activity A (166 aa).

This sequence belongs to the RraA family. As to quaternary structure, homotrimer. Binds to both RNA-binding sites in the C-terminal region of Rne and to RhlB.

It is found in the cytoplasm. Functionally, globally modulates RNA abundance by binding to RNase E (Rne) and regulating its endonucleolytic activity. Can modulate Rne action in a substrate-dependent manner by altering the composition of the degradosome. Modulates RNA-binding and helicase activities of the degradosome. The polypeptide is Regulator of ribonuclease activity A (Histophilus somni (strain 129Pt) (Haemophilus somnus)).